The sequence spans 863 residues: Potassium/sodium hyperpolarization-activated cyclic nucleotide-gated channel 2 (863 aa).

A compositionally biased stretch (gly residues) spans 1 to 10 (MDARGGGGRP). The disordered stretch occupies residues 1–131 (MDARGGGGRP…AGPAGEPRGS (131 aa)). Over 1 to 188 (MDARGGGGRP…PYSDFRFYWD (188 aa)) the chain is Cytoplasmic. Positions 17–47 (TPAPGPPPPPPPPAPPQPQPPPAPPPNPTTP) are enriched in pro residues. Residues 106-128 (GAASGPSAAEEAGSEEAGPAGEP) show a composition bias toward low complexity. Phosphoserine occurs at positions 119 and 134. The interval 131–182 (SQASFLQRQFGALLQPGVNKFSLRMFGSQKAVEREQERVKSAGAWIIHPYSD) is involved in subunit assembly. A helical transmembrane segment spans residues 189 to 209 (FTMLLFMVGNLIIIPVGITFF). At 210-213 (KDET) the chain is on the extracellular side. Residues 214–234 (TAPWIVFNVVSDTFFLMDLVL) traverse the membrane as a helical segment. Over 235–261 (NFRTGIVIEDNTEIILDPEKIKKKYLR) the chain is Cytoplasmic. The helical transmembrane segment at 262–282 (TWFVVDFVSSIPVDYIFLIVE) threads the bilayer. Residues 283 to 290 (KGIDSEVY) are Extracellular-facing. The chain crosses the membrane as a helical; Voltage-sensor span at residues 291-311 (KTARALRIVRFTKILSLLRLL). The Cytoplasmic segment spans residues 312 to 342 (RLSRLIRYIHQWEEIFHMTYDLASAVMRICN). The chain crosses the membrane as a helical span at residues 343–363 (LISMMLLLCHWDGCLQFLVPM). At 364-386 (LQDFPSDCWVSINNMVNHSWSEL) the chain is on the extracellular side. An N-linked (GlcNAc...) asparagine glycan is attached at Asn-380. The pore-forming intramembrane region spans 387–408 (YSFALFKAMSHMLCIGYGRQAP). Topologically, residues 409–413 (ESMTD) are extracellular. A helical transmembrane segment spans residues 414–434 (IWLTMLSMIVGATCYAMFIGH). The Cytoplasmic portion of the chain corresponds to 435–863 (ATALIQSLDS…SARSRLSSNL (429 aa)). Gly-581, Glu-582, Cys-584, Arg-591, Thr-592, and Arg-632 together coordinate 3',5'-cyclic AMP. Residue Ser-641 is modified to Phosphoserine; by PKG/PRKG2. Ser-726 carries the post-translational modification Phosphoserine. Arg-728 is modified (omega-N-methylarginine). A disordered region spans residues 730 to 863 (VRRAPPGPLP…SARSRLSSNL (134 aa)). The segment covering 734–755 (PPGPLPPAASPGPPAASPPAAP) has biased composition (pro residues). Residues Ser-743, Ser-750, and Ser-757 each carry the phosphoserine modification. Composition is skewed to low complexity over residues 756 to 765 (SSPRAPRTSP), 778 to 800 (PALP…PSLP), and 808 to 834 (PAAS…AAPS). Phosphoserine occurs at positions 840, 842, and 847.

It belongs to the potassium channel HCN family. As to quaternary structure, homotetramer. The channel is composed of a homo- or heterotetrameric complex of pore-forming subunits. Heterotetramer with HCN1. Forms an obligate 4:4 complex with accessory subunit PEX5L; regulates HCN2 cell-surface expression and cyclic nucleotide dependence. Interacts with KCNE2. S-palmitoylated. In terms of processing, N-glycosylated; required for cell surface trafficking of HCN2. Post-translationally, phosphorylation at Ser-641 by PRKG2 shifts the voltage-dependence to more negative voltages, hence counteracting the stimulatory effect of cGMP on gating. As to expression, highly expressed in brain. Detected at low levels in heart, in ventricle, atrium and in sinoatrial node (SAN).

It localises to the cell membrane. The catalysed reaction is Na(+)(in) = Na(+)(out). It catalyses the reaction K(+)(in) = K(+)(out). It carries out the reaction NH4(+)(in) = NH4(+)(out). With respect to regulation, activated by cAMP, and at 10-100 times higher concentrations, also by cGMP. cAMP binding causes a conformation change that leads to the assembly of an active tetramer and channel opening. In the absence of cAMP, the C-terminal region is thought to exert a tonic inhibition on the pore when HCN2 is in a non-tetrameric form. Channel activity is modulated by intracellular chloride ions and pH; acidic pH shifts the activation to more negative voltages. Phosphatidylinositol-4,5- bisphosphate (PIP(2)) acts as a ligand that allosterically opens HCN2 by shifting voltage-dependent channel activation toward depolarized potentials. Inhibited by extracellular cesium ions. In terms of biological role, hyperpolarization-activated ion channel exhibiting weak selectivity for potassium over sodium ions. Contributes to the native pacemaker currents in heart (If) and in neurons (Ih). Can also transport ammonium in the distal nephron. Involved in the initiation of neuropathic pain in sensory neurons. This Mus musculus (Mouse) protein is Potassium/sodium hyperpolarization-activated cyclic nucleotide-gated channel 2.